The chain runs to 94 residues: Integration host factor subunit beta (94 aa).

Belongs to the bacterial histone-like protein family. In terms of assembly, heterodimer of an alpha and a beta chain.

Functionally, this protein is one of the two subunits of integration host factor, a specific DNA-binding protein that functions in genetic recombination as well as in transcriptional and translational control. The protein is Integration host factor subunit beta of Photorhabdus laumondii subsp. laumondii (strain DSM 15139 / CIP 105565 / TT01) (Photorhabdus luminescens subsp. laumondii).